A 222-amino-acid chain; its full sequence is MQPLSPAFIDQLRFNEAGLIPAIAQDWLDGAVLMVAWMNRESIQQTLNSGEAHYWSRSRQELWHKGATSGHTQTLRSIRYDCDADVLLLTIEQRGDIACHTGARSCFYEGGDQRSDGGSNALSPPADACTELFRVIESRRDNPEEGSYTNKLLEGGDNKILKKIGEESAEFVMACKDDNPEEIAGEAADILFHMQVALAHHGVSWRQVQEVLAARRGAPRRH.

Residues 1–128 (MQPLSPAFID…SNALSPPADA (128 aa)) are phosphoribosyl-AMP cyclohydrolase. The segment at 129–222 (CTELFRVIES…AARRGAPRRH (94 aa)) is phosphoribosyl-ATP pyrophosphohydrolase.

In the N-terminal section; belongs to the PRA-CH family. The protein in the C-terminal section; belongs to the PRA-PH family.

It is found in the cytoplasm. It carries out the reaction 1-(5-phospho-beta-D-ribosyl)-ATP + H2O = 1-(5-phospho-beta-D-ribosyl)-5'-AMP + diphosphate + H(+). The catalysed reaction is 1-(5-phospho-beta-D-ribosyl)-5'-AMP + H2O = 1-(5-phospho-beta-D-ribosyl)-5-[(5-phospho-beta-D-ribosylamino)methylideneamino]imidazole-4-carboxamide. It functions in the pathway amino-acid biosynthesis; L-histidine biosynthesis; L-histidine from 5-phospho-alpha-D-ribose 1-diphosphate: step 2/9. It participates in amino-acid biosynthesis; L-histidine biosynthesis; L-histidine from 5-phospho-alpha-D-ribose 1-diphosphate: step 3/9. The sequence is that of Histidine biosynthesis bifunctional protein HisIE from Parasynechococcus marenigrum (strain WH8102).